The chain runs to 333 residues: Acetyltransferase Pat (333 aa).

3',5'-cyclic AMP is bound by residues 88-91 (GEIA), 98-99 (RS), and arginine 138. An N-acetyltransferase domain is found at 156-318 (LMLRPVLPGD…GELSLGREMV (163 aa)). Histidine 173 is a binding site for substrate. Aspartate 214 is a Mg(2+) binding site. Residues 238 to 240 (FTV), 246 to 251 (GRGIGS), asparagine 277, and arginine 286 each bind substrate.

In terms of assembly, homodimer. Mg(2+) is required as a cofactor.

Its activity is regulated as follows. Autoinhibited and allosterically activated by 3,5-cyclic adenosine monophosphate (cAMP). An extensive conformational rearrangement relieves this autoinhibition by means of a substrate-mimicking lid that covers the protein-substrate binding surface. In terms of biological role, catalyzes specifically the acetylation of the epsilon-amino group of a highly conserved lysine residue in acetyl-CoA synthetase (ACS). This acetylation results in the inactivation of ACS activity and could be important for mycobacteria to adjust to environmental changes. In Mycobacterium tuberculosis (strain ATCC 25618 / H37Rv), this protein is Acetyltransferase Pat.